The primary structure comprises 211 residues: ATP phosphoribosyltransferase (211 aa).

Belongs to the ATP phosphoribosyltransferase family. Short subfamily. In terms of assembly, heteromultimer composed of HisG and HisZ subunits.

It localises to the cytoplasm. It carries out the reaction 1-(5-phospho-beta-D-ribosyl)-ATP + diphosphate = 5-phospho-alpha-D-ribose 1-diphosphate + ATP. It participates in amino-acid biosynthesis; L-histidine biosynthesis; L-histidine from 5-phospho-alpha-D-ribose 1-diphosphate: step 1/9. Catalyzes the condensation of ATP and 5-phosphoribose 1-diphosphate to form N'-(5'-phosphoribosyl)-ATP (PR-ATP). Has a crucial role in the pathway because the rate of histidine biosynthesis seems to be controlled primarily by regulation of HisG enzymatic activity. The sequence is that of ATP phosphoribosyltransferase from Pseudomonas syringae pv. tomato (strain ATCC BAA-871 / DC3000).